We begin with the raw amino-acid sequence, 658 residues long: Aminopeptidase P1 (658 aa).

Residues Arg69 and His436 each contribute to the a peptide site. Mn(2+) is bound by residues Asp456, Asp467, and His530. A peptide is bound by residues His530, His539, and Glu563. The Mn(2+) site is built by Glu563 and Glu577.

It belongs to the peptidase M24B family. As to quaternary structure, homodimer. Interacts with N-1-naphthylphthalamic acid (NPA). Interacts with NBCL/BOP2/COCH around the plasma membrane and in the nucleus; this interaction disturbs its regulation of the nuclear transcription factor Y subunit (NF-YA1). Mn(2+) is required as a cofactor. Requires Zn(2+) as cofactor. Expressed at similar levels in shoot apical meristems (SAM), root meristems (RM), root apical meristems (RAM), roots and leaves and, to a slightly lesser degree, in root nodules.

It is found in the nucleus. Its subcellular location is the cytoplasm. The protein resides in the cell membrane. The protein localises to the microsome membrane. It carries out the reaction Release of any N-terminal amino acid, including proline, that is linked to proline, even from a dipeptide or tripeptide.. In terms of biological role, catalyzes the removal of a penultimate prolyl residue from the N-termini of peptides, such as Arg-Pro-Pro. Aminopeptidase that binds to the auxin transport inhibitor N-1-naphthylphthalamic acid (NPA). May play a negative role in the regulation of PIN auxin transport proteins. Involved in the coordination of the symbiotic nodule developmental program; prevents the formation of root nodules by regulating the expression of the nuclear transcription factor Y subunit (NF-YA1), a key nodulin. The chain is Aminopeptidase P1 from Lotus japonicus (Lotus corniculatus var. japonicus).